The sequence spans 242 residues: Biosynthetic peptidoglycan transglycosylase (242 aa).

Residues 19-39 (ILAALAVFWGGGIALFSVVPV) form a helical membrane-spanning segment.

It belongs to the glycosyltransferase 51 family.

Its subcellular location is the cell inner membrane. The catalysed reaction is [GlcNAc-(1-&gt;4)-Mur2Ac(oyl-L-Ala-gamma-D-Glu-L-Lys-D-Ala-D-Ala)](n)-di-trans,octa-cis-undecaprenyl diphosphate + beta-D-GlcNAc-(1-&gt;4)-Mur2Ac(oyl-L-Ala-gamma-D-Glu-L-Lys-D-Ala-D-Ala)-di-trans,octa-cis-undecaprenyl diphosphate = [GlcNAc-(1-&gt;4)-Mur2Ac(oyl-L-Ala-gamma-D-Glu-L-Lys-D-Ala-D-Ala)](n+1)-di-trans,octa-cis-undecaprenyl diphosphate + di-trans,octa-cis-undecaprenyl diphosphate + H(+). Its pathway is cell wall biogenesis; peptidoglycan biosynthesis. Its function is as follows. Peptidoglycan polymerase that catalyzes glycan chain elongation from lipid-linked precursors. The protein is Biosynthetic peptidoglycan transglycosylase of Salmonella paratyphi B (strain ATCC BAA-1250 / SPB7).